A 72-amino-acid chain; its full sequence is Large ribosomal subunit protein bL32 (72 aa).

Belongs to the bacterial ribosomal protein bL32 family.

The chain is Large ribosomal subunit protein bL32 from Dehalococcoides mccartyi (strain ATCC BAA-2100 / JCM 16839 / KCTC 5957 / BAV1).